Reading from the N-terminus, the 1553-residue chain is MDLEQDEWMSQRQRQQQMEFSRIGIEVIGSKKDLIVNSMKNHETTLTIINETYRIVYYDQYESKFTSCNIITFDGKDKRSIKKMKRVVQKLSNESTNSSHQFDLHSHALLQSSSSSSSSSTSSSPSLTSSPSSPISTSPPYHSSPQLLEHLLHQQQPITSVGSKPSFFVIINLYNDDRQSYMSEIVSFAGSFQFIEWRNDESWKEVFKLSSNLLTYHVKKNELARACTLGDINLLDEIILSGCSKSQLKEAQGAGYTIVFNSYTSYSSGSSLVVSGTMALLCAIVENGTFLLLSKSNITRFPMSIINMCSQLVELDMSNNRITEIPIEITELKFLKNLNLSDNLINDIPLEICNLTLLKVLLLNENPLNNFPSSIVELGTKKLLSFCRNILEGKSCETWNKVKLMFVGEEGVGKTRLCKLLIGSKYNKKKSSSSSSSSLSSLSSALSSSSSSSSIINSNSISNSNINMVNIKNENQVTGDTVSTEGVNIHDFKSKKVEFYAWDFGGQQIFYPTHQFFLTTQSLYLLIFRVNDSNFAERVNYWVHQIKAKSGISLPIIFFVGTHIDSCTPEQLSMAESILKSNFIKYSRVKQNVINFVSCVTGKGVKELKKRLIHESEKSRLIKKDIPGSYIILEQRLSNRGANQGRMSISNSASNSSSSLLNSSSSSSPSLTSKKSSSHLKHSQQQQQQHQQQQQQLQQSIKEKYIDYDDYLNECKLSYLKPHEIKDATDFLHNLGIILHFDSPKLNNLVVLDPQWLADVMSSLITFSHSWIKLGILNHSDLQSIWGGRYKQTLWPSLLKLLEKFEVSYQLPNLSKSLIPSLLPDDPIGEILEIKDREWVPLKLAMENNYVQVFGCDYHFSFMPLGFFARLLLRILLIQGIDIKTYWKDGVLLDILTPSDKIKQQQLLQKKSIFEPTTTLSPFLCSLSLTDSQNYSPLEPPPLILNSPRVNRKFISNSTSTTSTTTSTTSTSTTSSNNITPLSMSSITPYSPTSPRTPSFSSSSTTTSSSSSSSSPSSQFCGVGCHRNINKNNGSSNELIKTLTKINNQNGSSGELIKTTTTTSTSTSTTSTTTPTTTTPTIPIKNNNNKKLPINRTVSSLCLTAKPKLQALITFIKKKSFEQSHDNDSYKLNIQVRTYNTTIDKEHSVSLFFQQLLFTIDTLISGSYQGLEVTRTIPCTHCIQLNPTIEPYHFDLGDCISALEDGRSHVYCGNDPNTPVRIDYIAPDICLKKVPTFTDDQILYERQIGEGGFGLIHKGKLISNKSDIAIKSLILCNSNNNNNSNNNNNSNNSNNFKNNNNEDEFIEKFQEFQHEVFIMSNLNHPNIVKLYGLMHNPPRMVMEYVEHGDLYHLCQDKERYASLGWTLKLRLMIDIAKGIGYMQNQNPPIVHRDLRSPNIFLKSLDENSPVCAKIADFGLSQQSVYSVSGLLGNFQWMAPETIGVEDESYTEKVDTYSFAMILFTILTGEIPFDEYSFGKMQFINLIREENLRPTLPFDCDPRLSNLIQLCWSTNPKKRPSFTFIIKELLEIRIDSIQTSYFDSPFLKNYPASI.

The segment at 113–142 (SSSSSSSSTSSSPSLTSSPSSPISTSPPYH) is disordered. LRR repeat units follow at residues 287–309 (NGTFLLLSKSNITRFPMSIINMC), 311–333 (QLVELDMSNNRITEIPIEITELK), 334–356 (FLKNLNLSDNLINDIPLEICNLT), and 357–378 (LLKVLLLNENPLNNFPSSIVEL). The Roc domain maps to 395–619 (SCETWNKVKL…KRLIHESEKS (225 aa)). Disordered regions lie at residues 643-696 (NQGR…QQQQ), 955-1019 (ISNS…PSSQ), and 1048-1090 (NQNG…NNNK). Low complexity-rich tracts occupy residues 648-675 (SISNSASNSSSSLLNSSSSSSPSLTSKK), 683-696 (SQQQQQQHQQQQQQ), 956-1018 (SNST…SPSS), and 1059-1090 (TTTTTSTSTSTTSTTTPTTTTPTIPIKNNNNK). Positions 694-893 (QQQLQQSIKE…KTYWKDGVLL (200 aa)) constitute a COR domain. In terms of domain architecture, Protein kinase spans 1242-1546 (ILYERQIGEG…QTSYFDSPFL (305 aa)). ATP contacts are provided by residues 1248–1256 (IGEGGFGLI) and K1271. Residue D1393 is the Proton acceptor of the active site.

Belongs to the protein kinase superfamily. TKL Ser/Thr protein kinase family. ROCO subfamily.

The enzyme catalyses L-seryl-[protein] + ATP = O-phospho-L-seryl-[protein] + ADP + H(+). The catalysed reaction is L-threonyl-[protein] + ATP = O-phospho-L-threonyl-[protein] + ADP + H(+). Involved in growth, and during development, in aggregation. In Dictyostelium discoideum (Social amoeba), this protein is Probable serine/threonine-protein kinase qkgA (qkgA-1).